The primary structure comprises 295 residues: MKAYLVGLYTLTPTHPGSGTELGVVDQPIQRERHTGFPVIWGQSLKGVLRSYLKLVEKVDEEKINKIFGPPTEKAHEQAGLISVGDAKILFFPVRSLKGVYAYVTSPLVLNRFKRDLELAGVKNFQTEIPELTDTAIASEEITVDNKVILEEFAILIQKDDKGILESVVKAIEQAFGNEMAEKIKGRIAIIPDDVFRDLVELSTEIVARIRINAETGTVETGGLWYEEYIPSDTLFYSLILVTPRAKDNDMALIKEVLGKINGKYLQIGGNETVGKGFVKVTLKEVTNNGGTHAK.

Belongs to the CRISPR system Cmr4 family. Forms oligomers in isolation. Part of the type III-B Cmr ribonucleoprotein (RNP) complex, an elongated RNP with Cmr2 and Cmr3 as the base, with Cmr4 and Cmr5 forming a helical core along the mature crRNA (39 or 45 nt in length), while the complex is capped by Cmr6 and Cmr1. The 5' end of the crRNA is bound to Cmr2 and Cmr3, while Cmr6 and a Cmr1 subunit (Cmr1-1 or Cmr1-2) cap the 3' end of the crRNA. The target RNA lies anti-parallel to the crRNA, with its 5' end near Cmr1 and Cmr6 and its 3' end near Cmr2 and Cmr3; major target RNA cleavage occurs nears the junction of Cmr1/Cmr6 and Cmr4/Cmr5, with minor cleavage occurring at 6 nt intervals which coincide with the proposed spacing of Cmr4 subunits. Interacts with Cmr5. Interacts with Cmr2, Cmr3, Cmr5 and Cmr6.

The protein localises to the cytoplasm. CRISPR (clustered regularly interspaced short palindromic repeat), is an adaptive immune system that provides protection against mobile genetic elements (viruses, transposable elements and conjugative plasmids). CRISPR clusters contain sequences complementary to antecedent mobile elements and target invading nucleic acids. CRISPR clusters are transcribed and processed into CRISPR RNA (crRNA), formerly called psiRNA (prokaryotic silencing) in this organism. Part of the Cmr ribonucleoprotein complex which has divalent cation-dependent endoribonuclease activity specific for ssRNA complementary to the crRNA (target RNA), generating 5' hydroxy- and 3' phosphate or 2'-3' cyclic phosphate termini. This is probably the subunit that cleaves the target RNA. Cmr complex does not cleave ssDNA complementary to the crRNA. Cleavage of target RNA is guided by the crRNA; substrate cleavage occurs a fixed distance (14 nt) from the 3' end of the crRNA. In vitro reconstitution shows Cmr1-2 and Cmr5 are not absolutely necessary for target cleavage. In Pyrococcus furiosus (strain ATCC 43587 / DSM 3638 / JCM 8422 / Vc1), this protein is CRISPR system Cmr endoribonuclease Cmr4.